The following is a 105-amino-acid chain: MEVSQFDNVSVVKKANLYFDGKCVSHTVLFPDGTRKTLGVIFPAALTFNTGAPEIMEINAGTCRVRLAGSEDWQTYGAGQQFSVPGNSSFDIEVQETLDYVCHFA.

The protein belongs to the nucleoside phosphorylase PpnP family.

It carries out the reaction a purine D-ribonucleoside + phosphate = a purine nucleobase + alpha-D-ribose 1-phosphate. It catalyses the reaction adenosine + phosphate = alpha-D-ribose 1-phosphate + adenine. The enzyme catalyses cytidine + phosphate = cytosine + alpha-D-ribose 1-phosphate. The catalysed reaction is guanosine + phosphate = alpha-D-ribose 1-phosphate + guanine. It carries out the reaction inosine + phosphate = alpha-D-ribose 1-phosphate + hypoxanthine. It catalyses the reaction thymidine + phosphate = 2-deoxy-alpha-D-ribose 1-phosphate + thymine. The enzyme catalyses uridine + phosphate = alpha-D-ribose 1-phosphate + uracil. The catalysed reaction is xanthosine + phosphate = alpha-D-ribose 1-phosphate + xanthine. Catalyzes the phosphorolysis of diverse nucleosides, yielding D-ribose 1-phosphate and the respective free bases. Can use uridine, adenosine, guanosine, cytidine, thymidine, inosine and xanthosine as substrates. Also catalyzes the reverse reactions. This is Pyrimidine/purine nucleoside phosphorylase from Cupriavidus necator (strain ATCC 17699 / DSM 428 / KCTC 22496 / NCIMB 10442 / H16 / Stanier 337) (Ralstonia eutropha).